A 414-amino-acid chain; its full sequence is Gamma-glutamyl phosphate reductase (414 aa).

It belongs to the gamma-glutamyl phosphate reductase family.

The protein resides in the cytoplasm. It carries out the reaction L-glutamate 5-semialdehyde + phosphate + NADP(+) = L-glutamyl 5-phosphate + NADPH + H(+). The protein operates within amino-acid biosynthesis; L-proline biosynthesis; L-glutamate 5-semialdehyde from L-glutamate: step 2/2. In terms of biological role, catalyzes the NADPH-dependent reduction of L-glutamate 5-phosphate into L-glutamate 5-semialdehyde and phosphate. The product spontaneously undergoes cyclization to form 1-pyrroline-5-carboxylate. This chain is Gamma-glutamyl phosphate reductase, found in Geobacillus kaustophilus (strain HTA426).